A 243-amino-acid chain; its full sequence is Aliphatic sulfonates import ATP-binding protein SsuB (243 aa).

The 220-residue stretch at 11 to 230 (ATVRGLRKSY…RTHPSFASYT (220 aa)) folds into the ABC transporter domain. 43 to 50 (GRSGSGKS) contributes to the ATP binding site.

The protein belongs to the ABC transporter superfamily. Aliphatic sulfonates importer (TC 3.A.1.17.2) family. As to quaternary structure, the complex is composed of two ATP-binding proteins (SsuB), two transmembrane proteins (SsuC) and a solute-binding protein (SsuA).

It localises to the cell membrane. The catalysed reaction is ATP + H2O + aliphatic sulfonate-[sulfonate-binding protein]Side 1 = ADP + phosphate + aliphatic sulfonateSide 2 + [sulfonate-binding protein]Side 1.. In terms of biological role, part of the ABC transporter complex SsuABC involved in aliphatic sulfonates import. Responsible for energy coupling to the transport system. Is also involved in taurine transport. Seems to not be involved in long chain aliphatic sulfonates transport (chain length of eight carbon atoms or more). This is Aliphatic sulfonates import ATP-binding protein SsuB from Corynebacterium glutamicum (strain ATCC 13032 / DSM 20300 / JCM 1318 / BCRC 11384 / CCUG 27702 / LMG 3730 / NBRC 12168 / NCIMB 10025 / NRRL B-2784 / 534).